Here is a 279-residue protein sequence, read N- to C-terminus: uncharacterized protein (279 aa).

This is an uncharacterized protein from Acanthamoeba polyphaga (Amoeba).